The following is a 375-amino-acid chain: Neutral protease 2 homolog MGYG_00813 (375 aa).

Residues 1–19 form the signal peptide; sequence MQVIVALAALSSLAAPALG. The propeptide occupies 20–190; sequence FSIPRGVPVS…SGPLTRIGKR (171 aa). 2 disulfides stabilise this stretch: C198-C268 and C275-C293. H318 lines the Zn(2+) pocket. The active site involves E319. The Zn(2+) site is built by H322 and D333.

This sequence belongs to the peptidase M35 family. Zn(2+) serves as cofactor.

The protein localises to the secreted. It catalyses the reaction Preferential cleavage of bonds with hydrophobic residues in P1'. Also 3-Asn-|-Gln-4 and 8-Gly-|-Ser-9 bonds in insulin B chain.. Secreted metalloproteinase that allows assimilation of proteinaceous substrates. Shows high activities on basic nuclear substrates such as histone and protamine. May be involved in virulence. This is Neutral protease 2 homolog MGYG_00813 from Arthroderma gypseum (strain ATCC MYA-4604 / CBS 118893) (Microsporum gypseum).